Consider the following 78-residue polypeptide: Small ribosomal subunit protein bS18 (78 aa).

Belongs to the bacterial ribosomal protein bS18 family. Part of the 30S ribosomal subunit. Forms a tight heterodimer with protein bS6.

Its function is as follows. Binds as a heterodimer with protein bS6 to the central domain of the 16S rRNA, where it helps stabilize the platform of the 30S subunit. This chain is Small ribosomal subunit protein bS18, found in Kocuria rhizophila (strain ATCC 9341 / DSM 348 / NBRC 103217 / DC2201).